The following is a 60-amino-acid chain: Large ribosomal subunit protein bL32 (60 aa).

A compositionally biased stretch (basic residues) spans 1-16 (MAVPRRKTSPSRRGMR). A disordered region spans residues 1–60 (MAVPRRKTSPSRRGMRRSADAIKKPTYAEDKDSGELRRPHHLDLKTGMYKGRQVLIKKES). A compositionally biased stretch (basic and acidic residues) spans 17-44 (RSADAIKKPTYAEDKDSGELRRPHHLDL).

The protein belongs to the bacterial ribosomal protein bL32 family.

The polypeptide is Large ribosomal subunit protein bL32 (Rhodopseudomonas palustris (strain BisA53)).